A 338-amino-acid polypeptide reads, in one-letter code: Aspartate-semialdehyde dehydrogenase (338 aa).

Residues 13–16 (SGAV) and 41–42 (RS) each bind NADP(+). Arginine 101 provides a ligand contact to phosphate. The active-site Acyl-thioester intermediate is the cysteine 132. Position 159 (glutamine 159) interacts with substrate. Residue 162 to 163 (SG) participates in NADP(+) binding. Lysine 216 is a binding site for phosphate. Arginine 238 lines the substrate pocket. Histidine 245 acts as the Proton acceptor in catalysis. Asparagine 317 serves as a coordination point for NADP(+).

Belongs to the aspartate-semialdehyde dehydrogenase family. As to quaternary structure, homodimer.

The catalysed reaction is L-aspartate 4-semialdehyde + phosphate + NADP(+) = 4-phospho-L-aspartate + NADPH + H(+). Its pathway is amino-acid biosynthesis; L-lysine biosynthesis via DAP pathway; (S)-tetrahydrodipicolinate from L-aspartate: step 2/4. It participates in amino-acid biosynthesis; L-methionine biosynthesis via de novo pathway; L-homoserine from L-aspartate: step 2/3. It functions in the pathway amino-acid biosynthesis; L-threonine biosynthesis; L-threonine from L-aspartate: step 2/5. Functionally, catalyzes the NADPH-dependent formation of L-aspartate-semialdehyde (L-ASA) by the reductive dephosphorylation of L-aspartyl-4-phosphate. In Shewanella violacea (strain JCM 10179 / CIP 106290 / LMG 19151 / DSS12), this protein is Aspartate-semialdehyde dehydrogenase.